The sequence spans 66 residues: Large ribosomal subunit protein bL33c (66 aa).

Belongs to the bacterial ribosomal protein bL33 family.

It localises to the plastid. Its subcellular location is the chloroplast. The polypeptide is Large ribosomal subunit protein bL33c (Crucihimalaya wallichii (Rock-cress)).